The following is a 298-amino-acid chain: 33 kDa chaperonin (298 aa).

2 cysteine pairs are disulfide-bonded: Cys239–Cys241 and Cys272–Cys275.

The protein belongs to the HSP33 family. In terms of processing, under oxidizing conditions two disulfide bonds are formed involving the reactive cysteines. Under reducing conditions zinc is bound to the reactive cysteines and the protein is inactive.

The protein localises to the cytoplasm. Redox regulated molecular chaperone. Protects both thermally unfolding and oxidatively damaged proteins from irreversible aggregation. Plays an important role in the bacterial defense system toward oxidative stress. The sequence is that of 33 kDa chaperonin from Picosynechococcus sp. (strain ATCC 27264 / PCC 7002 / PR-6) (Agmenellum quadruplicatum).